The chain runs to 485 residues: Pre-glycoprotein polyprotein GP complex (485 aa).

Gly-2 is lipidated: N-myristoyl glycine; by host. Residues 2–17 are Extracellular-facing; it reads GQFISFMQEIPTFLQE. A helical membrane pass occupies residues 18 to 33; it reads ALNIALVAVSLIAIIK. Residues 34–58 lie on the Cytoplasmic side of the membrane; sequence GVVNLYKSGLFQFFVFLALAGRSCT. Zn(2+) is bound at residue Cys-57. Over 59 to 424 the chain is Extracellular; the sequence is EEAFKIGLHT…QGKTPLTLVD (366 aa). 6 cysteine pairs are disulfide-bonded: Cys-92–Cys-226, Cys-135–Cys-164, Cys-207–Cys-213, Cys-271–Cys-284, Cys-293–Cys-302, and Cys-356–Cys-377. N-linked (GlcNAc...) asparagine; by host glycosylation is found at Asn-95 and Asn-105. Residues Asn-166 and Asn-178 are each glycosylated (N-linked (GlcNAc...) asparagine; by host). The segment at 250–286 is fusion; it reads LKAFFSWSLTDSSGKDTPGGYCLEEWMLVAAKMKCFG. The tract at residues 287–355 is HR1; it reads NTAVAKCNLN…KIRELMSVPY (69 aa). N-linked (GlcNAc...) asparagine; by host glycans are attached at residues Asn-357, Asn-365, Asn-382, and Asn-387. The segment at 360-423 is HR2; it reads KFWYVNHTLS…RQGKTPLTLV (64 aa). A helical transmembrane segment spans residues 425 to 445; it reads ICFWSTVFFTASLFLHLVGIP. Over 446 to 485 the chain is Cytoplasmic; sequence THRHIRGEACPLPHRLNSLGGCRCGKYPNLKKPTVWRRGH. The Zn(2+) site is built by His-447, His-449, Cys-455, His-459, Cys-467, Cys-469, and His-485.

The protein belongs to the arenaviridae GPC protein family. Interacts with glycoprotein G2. Part of the GP complex (GP-C) together with glycoprotein G1 and glycoprotein G2. The GP-complex interacts with protein Z, which interacts with ribonucleocapsid; these interactions may induce virion budding. As to quaternary structure, homotrimer; disulfide-linked. In pre-fusion state, G1 homotrimers bind G2 homotrimers via ionic interactions. Part of the GP complex (GP-C) together with glycoprotein G2 and the stable signal peptide. Interacts with host TFRC. The GP-complex interacts with protein Z, which interacts with ribonucleocapsid; these interactions may induce virion budding. In terms of assembly, homotrimer. Interacts with the stable signal peptide. In pre-fusion state, G2 homotrimers bind G1 homotrimers via ionic interactions. Part of the GP complex (GP-C) together with glycoprotein G1 and the stable signal peptide. Acidification in the endosome triggers rearrangements, which ultimately leads to a 6 helix bundle formed by the two heptad repeat domains (HR1 and HR2) in post-fusion state. The GP-complex interacts with protein Z, which interacts with ribonucleocapsid; these interactions may induce virion budding. In terms of processing, specific enzymatic cleavages in vivo yield mature proteins. GP-C polyprotein is cleaved in the endoplasmic reticulum by the host protease MBTPS1. Only cleaved glycoprotein is incorporated into virions. Post-translationally, the SSP remains stably associated with the GP complex following cleavage by signal peptidase and plays crucial roles in the trafficking of GP through the secretory pathway. Myristoylation is necessary for GP2-mediated fusion activity.

Its subcellular location is the virion membrane. The protein resides in the host endoplasmic reticulum membrane. It is found in the host Golgi apparatus membrane. The protein localises to the host cell membrane. Its function is as follows. Functions as a cleaved signal peptide that is retained as the third component of the GP complex (GP-C). Helps to stabilize the spike complex in its native conformation. The SSP is required for efficient glycoprotein expression, post-translational maturation cleavage of G1 and G2, glycoprotein transport to the cell surface plasma membrane, formation of infectious virus particles, and acid pH-dependent glycoprotein-mediated cell fusion. In terms of biological role, forms the virion spikes together with glycoprotein G2. The glycoprotein spike trimers are connected to the underlying matrix. Mediates virus attachment to host TFRC. This attachment induces virion internalization predominantly through clathrin-mediated endocytosis. Functionally, forms the virion spikes together with glycoprotein G1. The glycoprotein spike trimers are connected to the underlying matrix. Class I viral fusion protein that directs fusion of viral and host endosomal membranes, leading to delivery of the nucleocapsid into the cytoplasm. Membrane fusion is mediated by irreversible conformational changes induced by acidification. The chain is Pre-glycoprotein polyprotein GP complex from Junin mammarenavirus (JUNV).